A 129-amino-acid polypeptide reads, in one-letter code: Small ribosomal subunit protein uS11 (129 aa).

It belongs to the universal ribosomal protein uS11 family. Part of the 30S ribosomal subunit. Interacts with proteins S7 and S18. Binds to IF-3.

In terms of biological role, located on the platform of the 30S subunit, it bridges several disparate RNA helices of the 16S rRNA. Forms part of the Shine-Dalgarno cleft in the 70S ribosome. The protein is Small ribosomal subunit protein uS11 of Bradyrhizobium diazoefficiens (strain JCM 10833 / BCRC 13528 / IAM 13628 / NBRC 14792 / USDA 110).